The following is a 165-amino-acid chain: NADPH-dependent 7-cyano-7-deazaguanine reductase (165 aa).

The active-site Thioimide intermediate is the Cys56. Asp63 acts as the Proton donor in catalysis. Substrate is bound by residues 78 to 80 (VES) and 97 to 98 (HE).

This sequence belongs to the GTP cyclohydrolase I family. QueF type 1 subfamily.

Its subcellular location is the cytoplasm. It carries out the reaction 7-aminomethyl-7-carbaguanine + 2 NADP(+) = 7-cyano-7-deazaguanine + 2 NADPH + 3 H(+). The protein operates within tRNA modification; tRNA-queuosine biosynthesis. Catalyzes the NADPH-dependent reduction of 7-cyano-7-deazaguanine (preQ0) to 7-aminomethyl-7-deazaguanine (preQ1). The protein is NADPH-dependent 7-cyano-7-deazaguanine reductase of Bacillus thuringiensis subsp. konkukian (strain 97-27).